An 86-amino-acid chain; its full sequence is Small nuclear ribonucleoprotein F (86 aa).

One can recognise a Sm domain in the interval 14–86 (NPKPFLKGLV…NVLYIRELPN (73 aa)).

It belongs to the snRNP Sm proteins family. SmF/LSm6 subfamily. Component of the Sm core complex, present in spliceosomal snRNP U1, U2, U4/U6 and U5. The core complex contains SMB1, SMD1, SMD2, SMD3, SME1, SMX3 and SMX2 (Sm proteins B, D1, D2, D3, E, F and G, respectively), and is probably a heptameric ring structure. SMX3 specifically interacts with SME1. Belongs to the CWC complex (or CEF1-associated complex), a spliceosome sub-complex reminiscent of a late-stage spliceosome composed of the U2, U5 and U6 snRNAs and at least BUD13, BUD31, BRR2, CDC40, CEF1, CLF1, CUS1, CWC2, CWC15, CWC21, CWC22, CWC23, CWC24, CWC25, CWC27, ECM2, HSH155, IST3, ISY1, LEA1, MSL1, NTC20, PRP8, PRP9, PRP11, PRP19, PRP21, PRP22, PRP45, PRP46, SLU7, SMB1, SMD1, SMD2, SMD3, SMX2, SMX3, SNT309, SNU114, SPP2, SYF1, SYF2, RSE1 and YJU2. Component of the U4/U6-U5 tri-snRNP complex composed of the U4, U6 and U5 snRNAs and at least PRP3, PRP4, PRP6, PRP8, PRP18, PRP31, PRP38, SNU13, SNU23, SNU66, SNU114, SPP381, SMB1, SMD1, SMD2, SMD3, SMX2, SMX3, LSM2, LSM3, LSM4, LSM5, LSM6, LSM7, LSM8, BRR2 and DIB1.

Its subcellular location is the nucleus. It localises to the cytoplasm. In terms of biological role, plays a role in pre-mRNA splicing as a core component of the spliceosomal U1, U2, U4 and U5 small nuclear ribonucleoproteins (snRNPs), the building blocks of the spliceosome. In Saccharomyces cerevisiae (strain ATCC 204508 / S288c) (Baker's yeast), this protein is Small nuclear ribonucleoprotein F (SMX3).